Here is a 235-residue protein sequence, read N- to C-terminus: Chalcone--flavanone isomerase 1 (235 aa).

Residues T50 and S192 each contribute to the substrate site.

The protein belongs to the chalcone isomerase family.

The catalysed reaction is a chalcone = a flavanone.. The protein operates within secondary metabolite biosynthesis; flavonoid biosynthesis. Functionally, catalyzes the intramolecular cyclization of bicyclic chalcones into tricyclic (S)-flavanones. Responsible for the isomerization of 4,2',4',6'-tetrahydroxychalcone (also termed chalcone) into naringenin. In Chrysanthemum morifolium (Florist's daisy), this protein is Chalcone--flavanone isomerase 1 (CHI1).